The primary structure comprises 580 residues: E3 ubiquitin-protein ligase TRIM45 (580 aa).

Residues 29 to 98 (CPLCLGLFKA…QIGILCPVCD (70 aa)) form an RING-type zinc finger. B box-type zinc fingers lie at residues 130-176 (GQGL…MVDL) and 186-227 (GKPI…CDFT). Zn(2+) is bound by residues C135, C138, C158, H162, C191, H194, C214, and H219. The stretch at 281–335 (SEGYIKAIEEHRDKLLKQLEDIRAQKENSLQLQKAQLEQLLADMRTGVEFTEHLL) forms a coiled coil. A Filamin repeat occupies 394-497 (TKEVDPAKCV…VQGSPFTVMV (104 aa)).

The protein belongs to the TRIM/RBCC family. In terms of tissue distribution, expressed in skeletal muscle, brain, heart and pancreas.

Its subcellular location is the cytoplasm. It localises to the nucleus. It carries out the reaction S-ubiquitinyl-[E2 ubiquitin-conjugating enzyme]-L-cysteine + [acceptor protein]-L-lysine = [E2 ubiquitin-conjugating enzyme]-L-cysteine + N(6)-ubiquitinyl-[acceptor protein]-L-lysine.. In terms of biological role, E3 ubiquitin-protein ligase that plays a role in the regulation of inflammatory response. Mechanistically, mediates the 'Lys-48'-linked polyubiquitination of TAB2, a regulatory protein of the kinase TAK1, leading to its degradation via the proteasomal pathway and inhibition of the TLR-mediated inflammatory immune response. May act as a transcriptional repressor in mitogen-activated protein kinase signaling pathway. This chain is E3 ubiquitin-protein ligase TRIM45 (TRIM45), found in Homo sapiens (Human).